A 638-amino-acid chain; its full sequence is Phosphomethylpyrimidine synthase (638 aa).

Substrate is bound by residues N235, M264, Y293, H329, 349–351 (SRG), 390–393 (DGLR), and E429. Residue H433 participates in Zn(2+) binding. A substrate-binding site is contributed by Y456. H497 contacts Zn(2+). Residues C577, C580, and C585 each contribute to the [4Fe-4S] cluster site.

It belongs to the ThiC family. Homodimer. It depends on [4Fe-4S] cluster as a cofactor.

It catalyses the reaction 5-amino-1-(5-phospho-beta-D-ribosyl)imidazole + S-adenosyl-L-methionine = 4-amino-2-methyl-5-(phosphooxymethyl)pyrimidine + CO + 5'-deoxyadenosine + formate + L-methionine + 3 H(+). It functions in the pathway cofactor biosynthesis; thiamine diphosphate biosynthesis. In terms of biological role, catalyzes the synthesis of the hydroxymethylpyrimidine phosphate (HMP-P) moiety of thiamine from aminoimidazole ribotide (AIR) in a radical S-adenosyl-L-methionine (SAM)-dependent reaction. In Polaromonas naphthalenivorans (strain CJ2), this protein is Phosphomethylpyrimidine synthase.